Reading from the N-terminus, the 433-residue chain is Succinate--CoA ligase [GDP-forming] subunit beta, mitochondrial (433 aa).

Residues 1-38 constitute a mitochondrion transit peptide; that stretch reads IPAAPVAAQARKLLRDLAFRPPLLAARSQVVQLTPRRW. The ATP-grasp domain maps to 47-275; it reads KKLMSDNGVK…NAEFRQKDIF (229 aa). A GTP-binding site is contributed by Gln-58. Residue Lys-74 is modified to N6-acetyllysine. The residue at position 79 (Lys-79) is an N6-succinyllysine. 91 to 93 contacts GTP; the sequence is GRG. An N6-acetyllysine mark is found at Lys-133 and Lys-140. Position 147 (Leu-147) interacts with GTP. At Ser-162 the chain carries Phosphoserine. An N6-acetyllysine mark is found at Lys-201 and Lys-228. Residues Asn-244 and Asp-258 each contribute to the Mg(2+) site. N6-acetyllysine is present on residues Lys-272 and Lys-292. Asn-309 contributes to the substrate binding site. The residue at position 339 (Lys-339) is an N6-succinyllysine. Lys-348 carries the N6-acetyllysine modification. 366–368 contacts substrate; that stretch reads GIV. 2 positions are modified to N6-acetyllysine: Lys-387 and Lys-424.

The protein belongs to the succinate/malate CoA ligase beta subunit family. GTP-specific subunit beta subfamily. In terms of assembly, heterodimer of an alpha and a beta subunit. The beta subunit determines specificity for GTP. Mg(2+) is required as a cofactor.

The protein resides in the mitochondrion. It catalyses the reaction GTP + succinate + CoA = succinyl-CoA + GDP + phosphate. It participates in carbohydrate metabolism; tricarboxylic acid cycle; succinate from succinyl-CoA (ligase route): step 1/1. GTP-specific succinyl-CoA synthetase functions in the citric acid cycle (TCA), coupling the hydrolysis of succinyl-CoA to the synthesis of GTP and thus represents the only step of substrate-level phosphorylation in the TCA. The beta subunit provides nucleotide specificity of the enzyme and binds the substrate succinate, while the binding sites for coenzyme A and phosphate are found in the alpha subunit. The sequence is that of Succinate--CoA ligase [GDP-forming] subunit beta, mitochondrial from Sus scrofa (Pig).